The sequence spans 503 residues: Lanosterol 14-alpha demethylase (503 aa).

A helical membrane pass occupies residues 24 to 44 (GNLLSTLLIACAFTLSLVYLF). Cys449 is a binding site for heme.

This sequence belongs to the cytochrome P450 family. Heme is required as a cofactor. Post-translationally, ubiquitinated by MARCHF6, leading to proteasomal degradation.

The protein resides in the endoplasmic reticulum membrane. It is found in the microsome membrane. The enzyme catalyses a 14alpha-methyl steroid + 3 reduced [NADPH--hemoprotein reductase] + 3 O2 = a Delta(14) steroid + formate + 3 oxidized [NADPH--hemoprotein reductase] + 4 H2O + 4 H(+). It catalyses the reaction lanosterol + 3 reduced [NADPH--hemoprotein reductase] + 3 O2 = 4,4-dimethyl-5alpha-cholesta-8,14,24-trien-3beta-ol + formate + 3 oxidized [NADPH--hemoprotein reductase] + 4 H2O + 4 H(+). It carries out the reaction 24,25-dihydrolanosterol + 3 reduced [NADPH--hemoprotein reductase] + 3 O2 = 4,4-dimethyl-8,14-cholestadien-3beta-ol + formate + 3 oxidized [NADPH--hemoprotein reductase] + 4 H2O + 4 H(+). The catalysed reaction is a 14alpha-methyl steroid + reduced [NADPH--hemoprotein reductase] + O2 = a 14alpha-hydroxymethyl steroid + oxidized [NADPH--hemoprotein reductase] + H2O + H(+). The enzyme catalyses a 14alpha-hydroxymethyl steroid + reduced [NADPH--hemoprotein reductase] + O2 = a 14alpha-formyl steroid + oxidized [NADPH--hemoprotein reductase] + 2 H2O + H(+). It catalyses the reaction a 14alpha-formyl steroid + reduced [NADPH--hemoprotein reductase] + O2 = a Delta(14) steroid + formate + oxidized [NADPH--hemoprotein reductase] + H2O + 2 H(+). It carries out the reaction lanosterol + reduced [NADPH--hemoprotein reductase] + O2 = 32-hydroxylanosterol + oxidized [NADPH--hemoprotein reductase] + H2O + H(+). The catalysed reaction is 32-hydroxylanosterol + reduced [NADPH--hemoprotein reductase] + O2 = 32-oxolanosterol + oxidized [NADPH--hemoprotein reductase] + 2 H2O + H(+). The enzyme catalyses 32-oxolanosterol + reduced [NADPH--hemoprotein reductase] + O2 = 4,4-dimethyl-5alpha-cholesta-8,14,24-trien-3beta-ol + formate + oxidized [NADPH--hemoprotein reductase] + H2O + 2 H(+). It catalyses the reaction 24,25-dihydrolanosterol + reduced [NADPH--hemoprotein reductase] + O2 = 32-hydroxy-24,25-dihydrolanosterol + oxidized [NADPH--hemoprotein reductase] + H2O + H(+). It carries out the reaction 32-hydroxy-24,25-dihydrolanosterol + reduced [NADPH--hemoprotein reductase] + O2 = 32-oxo-24,25-dihydrolanosterol + oxidized [NADPH--hemoprotein reductase] + 2 H2O + H(+). The catalysed reaction is 32-oxo-24,25-dihydrolanosterol + reduced [NADPH--hemoprotein reductase] + O2 = 4,4-dimethyl-8,14-cholestadien-3beta-ol + formate + oxidized [NADPH--hemoprotein reductase] + H2O + 2 H(+). Its pathway is steroid biosynthesis; zymosterol biosynthesis; zymosterol from lanosterol: step 1/6. Inhibited by azalanstat. Inhibited by azole antifungal agents ketoconazole, itraconazole and fluconazole. In terms of biological role, sterol 14alpha-demethylase that plays a critical role in the cholesterol biosynthesis pathway, being cholesterol the major sterol component in mammalian membranes as well as a precursor for bile acid and steroid hormone synthesis. Cytochrome P450 monooxygenase that catalyzes the three-step oxidative removal of the 14alpha-methyl group (C-32) of sterols such as lanosterol (lanosta-8,24-dien-3beta-ol) and 24,25-dihydrolanosterol (DHL) in the form of formate, and converts the sterols to 4,4-dimethyl-5alpha-cholesta-8,14,24-trien-3beta-ol and 4,4-dimethyl-8,14-cholestadien-3beta-ol, respectively, which are intermediates of cholesterol biosynthesis. Can also demethylate substrates not intrinsic to mammals, such as eburicol (24-methylene-24,25-dihydrolanosterol), but at a lower rate than DHL. This chain is Lanosterol 14-alpha demethylase, found in Rattus norvegicus (Rat).